A 242-amino-acid polypeptide reads, in one-letter code: UPF0173 metal-dependent hydrolase Rxyl_1261 (242 aa).

It belongs to the UPF0173 family.

The chain is UPF0173 metal-dependent hydrolase Rxyl_1261 from Rubrobacter xylanophilus (strain DSM 9941 / JCM 11954 / NBRC 16129 / PRD-1).